A 315-amino-acid polypeptide reads, in one-letter code: KH domain-containing protein At5g56140 (315 aa).

2 disordered regions span residues 1-53 and 136-158; these read MMMM…GGLR and SQFPSERSVPSSPGPNWLNSPGS. Residues 7 to 28 show a composition bias toward gly residues; it reads LGGGGGGGGGSGGGIGGGGGGR. 2 stretches are compositionally biased toward polar residues: residues 31–53 and 136–146; these read TYSSSLSVPPSAPQSPNYSGGLR and SQFPSERSVPS. Positions 171-238 constitute a KH domain; sequence DIPVDNYPNF…EHLNEPLHIL (68 aa). The tract at residues 289 to 315 is disordered; that stretch reads REEGSPMSGSVSPYNSLGMKRAKTREG. At serine 300 the chain carries Phosphoserine.

The protein localises to the nucleus. In Arabidopsis thaliana (Mouse-ear cress), this protein is KH domain-containing protein At5g56140.